We begin with the raw amino-acid sequence, 723 residues long: MDATSKPAGKCPVMHGGNTVSGKSVTEWWPNALNLDILHQHDTKTNPLGTSFNYREALKTLDVEALKADLRALMTDSQEWWPADWGSYVGMMARVTWHAAGSYRVTDGRGGANTGNQRFAPLNSWPDNVNTDKGRRLLWPIKKKYGNKISWADLIALAGTIAYDVAGLKTFGFAFGREDIWAPEKDTYWGDEKEWLAPSDGRYGDVSKPETLENPLAAVQMGLIYVNPEGVNGKSDPLATAAQMRETFARMGMDDEETVALTAGGHTIGKSHGNGSAANLSPDPEAAGPEYQGLGWINTKGRGIGRDTVVSGIEGAWTSEPTKWDNGFFDMLFKHEWTLTHSPAGASQWAPITIAEEDKPVDVEDASIRTIPMMTDADMALKVDPIYREISLKFKDDQDHFSDVFARAWFKLTHRDMGPKSRYVGPDVPAEDLIWQDPIPAGSTSYDVAAVKAKIAASGLSVADLVSTAWDSARTFRGSDKRGGANGARIRLAPQKDWEGNEPARLSRVLSVLEPIARETGASIADVIVLAGNYGVEQAAKAAGFDIAVPFAAGRGDASAEQTDADSFAPLEPLADGFRNWVKKDYVVSPEELLLDRAQLLGLTAPELTVLIGGLRVIGANYGGAAHGVFTDKPGALTTDFFTTLTDMAYSWVPTGNNLYEIRDRKTGAARYSATRVDLVIGSNSILRAYAEVYAQDDNREKFARDFIAAWTKVMNADRFDLI.

The tryptophyl-tyrosyl-methioninium (Trp-Tyr) (with M-251) cross-link spans 97-225 (WHAAGSYRVT…LAAVQMGLIY (129 aa)). Histidine 98 serves as the catalytic Proton acceptor. A cross-link (tryptophyl-tyrosyl-methioninium (Tyr-Met) (with W-97)) is located at residues 225–251 (YVNPEGVNGKSDPLATAAQMRETFARM). Histidine 266 provides a ligand contact to heme b.

The protein belongs to the peroxidase family. Peroxidase/catalase subfamily. In terms of assembly, homodimer or homotetramer. The cofactor is heme b. Post-translationally, formation of the three residue Trp-Tyr-Met cross-link is important for the catalase, but not the peroxidase activity of the enzyme.

The enzyme catalyses H2O2 + AH2 = A + 2 H2O. The catalysed reaction is 2 H2O2 = O2 + 2 H2O. Functionally, bifunctional enzyme with both catalase and broad-spectrum peroxidase activity. Involved in tumorigenesis. The sequence is that of Catalase-peroxidase from Rhizobium radiobacter (Agrobacterium tumefaciens).